The following is a 116-amino-acid chain: Orphan antitoxin YagB (116 aa).

The protein belongs to the CbeA/YafW/YfjZ antitoxin family.

Putative antitoxin component of a type IV toxin-antitoxin (TA) system; its cognate toxin is unknown. The sequence is that of Orphan antitoxin YagB (yagB) from Escherichia coli (strain K12).